The chain runs to 305 residues: Sulfate adenylyltransferase subunit 2 (305 aa).

It belongs to the PAPS reductase family. CysD subfamily. In terms of assembly, heterodimer composed of CysD, the smaller subunit, and CysN.

It catalyses the reaction sulfate + ATP + H(+) = adenosine 5'-phosphosulfate + diphosphate. It participates in sulfur metabolism; hydrogen sulfide biosynthesis; sulfite from sulfate: step 1/3. Its function is as follows. With CysN forms the ATP sulfurylase (ATPS) that catalyzes the adenylation of sulfate producing adenosine 5'-phosphosulfate (APS) and diphosphate, the first enzymatic step in sulfur assimilation pathway. APS synthesis involves the formation of a high-energy phosphoric-sulfuric acid anhydride bond driven by GTP hydrolysis by CysN coupled to ATP hydrolysis by CysD. The chain is Sulfate adenylyltransferase subunit 2 from Pseudomonas aeruginosa (strain LESB58).